The sequence spans 721 residues: Catalase-peroxidase 1 (721 aa).

The segment at residues 98-223 (WHAAGSYRVA…LAAVQMGLIY (126 aa)) is a cross-link (tryptophyl-tyrosyl-methioninium (Trp-Tyr) (with M-249)). The active-site Proton acceptor is the His-99. The segment at residues 223-249 (YVNPEGVNGQPDPLRTAQDVRVTFGRM) is a cross-link (tryptophyl-tyrosyl-methioninium (Tyr-Met) (with W-98)). His-264 provides a ligand contact to heme b.

This sequence belongs to the peroxidase family. Peroxidase/catalase subfamily. Homodimer or homotetramer. It depends on heme b as a cofactor. In terms of processing, formation of the three residue Trp-Tyr-Met cross-link is important for the catalase, but not the peroxidase activity of the enzyme.

It carries out the reaction H2O2 + AH2 = A + 2 H2O. It catalyses the reaction 2 H2O2 = O2 + 2 H2O. Functionally, bifunctional enzyme with both catalase and broad-spectrum peroxidase activity. This is Catalase-peroxidase 1 from Legionella pneumophila (strain Paris).